The primary structure comprises 457 residues: Argininosuccinate lyase (457 aa).

The protein belongs to the lyase 1 family. Argininosuccinate lyase subfamily.

The protein localises to the cytoplasm. The enzyme catalyses 2-(N(omega)-L-arginino)succinate = fumarate + L-arginine. It functions in the pathway amino-acid biosynthesis; L-arginine biosynthesis; L-arginine from L-ornithine and carbamoyl phosphate: step 3/3. The polypeptide is Argininosuccinate lyase (Shigella flexneri serotype 5b (strain 8401)).